The sequence spans 954 residues: cGMP-specific 3',5'-cyclic phosphodiesterase alpha (954 aa).

The Cytoplasmic portion of the chain corresponds to 1 to 259; the sequence is MMDTKVDQTI…NTFYSSFPFK (259 aa). Residues 260–280 traverse the membrane as a helical segment; it reads LFLHSLYMIFICFIYFVVLYF. The Extracellular portion of the chain corresponds to 281–296; it reads MLLKKIYTHPFIFHLS. A helical membrane pass occupies residues 297–317; the sequence is VLKFLFDIIFFLSFILYPLFL. The Cytoplasmic portion of the chain corresponds to 318 to 327; it reads RLKRIDKIIY. Residues 328 to 348 traverse the membrane as a helical segment; the sequence is SSYISSYIFVCVTFLYSFIIF. Residues 349 to 365 lie on the Extracellular side of the membrane; that stretch reads KCSSYSVKMNSNTYQNN. Residues 366–386 traverse the membrane as a helical segment; sequence FVFQNMLFLLINIIYICIFCF. The Cytoplasmic portion of the chain corresponds to 387–401; the sequence is LKNYMILYSFLYNCR. The helical transmembrane segment at 402 to 422 threads the bilayer; the sequence is FSIFCILFIFLYYYLFFSLDF. Over 423-432 the chain is Extracellular; it reads YRIIHLPLDN. Residues 433 to 453 traverse the membrane as a helical segment; that stretch reads FFFPFLCFLFFSFLFIFKIIM. Residues 454-954 lie on the Cytoplasmic side of the membrane; that stretch reads SLYYEYVYEK…LSKLELIKFE (501 aa). Residues 586-930 form the PDEase domain; sequence NQEETKSFLS…ERWESHKNDN (345 aa). The active-site Proton donor is the H680. 680-684 is a 3',5'-cyclic GMP binding site; that stretch reads HTSLH. H684, H720, D721, and D832 together coordinate Zn(2+). 3 residues coordinate 3',5'-cyclic GMP: D721, D832, and Q884. Position 721 (D721) interacts with Mg(2+).

It belongs to the cyclic nucleotide phosphodiesterase family. Zn(2+) is required as a cofactor. Mg(2+) serves as cofactor.

It is found in the membrane. The catalysed reaction is 3',5'-cyclic GMP + H2O = GMP + H(+). The protein operates within purine metabolism; 3',5'-cyclic GMP degradation; GMP from 3',5'-cyclic GMP: step 1/1. With respect to regulation, not inhibited by cAMP. Inhibited by zaprinast. Specifically hydrolyzes the second messenger cGMP, which is a key regulator of many important physiological processes. This Plasmodium falciparum (isolate 3D7) protein is cGMP-specific 3',5'-cyclic phosphodiesterase alpha.